Here is a 36-residue protein sequence, read N- to C-terminus: Photosystem I reaction center subunit VIII (36 aa).

The chain crosses the membrane as a helical span at residues 8-28 (SVLVPLVGLIFPAMAMASLFL).

This sequence belongs to the PsaI family.

Its subcellular location is the plastid. It is found in the chloroplast thylakoid membrane. Its function is as follows. May help in the organization of the PsaL subunit. This is Photosystem I reaction center subunit VIII from Daucus carota (Wild carrot).